The primary structure comprises 347 residues: tRNA N6-adenosine threonylcarbamoyltransferase (347 aa).

Fe cation is bound by residues H111 and H115. Residues 133–137, D166, G179, and N278 contribute to the substrate site; that span reads LASGG. Fe cation is bound at residue D306.

Belongs to the KAE1 / TsaD family. The cofactor is Fe(2+).

The protein resides in the cytoplasm. The catalysed reaction is L-threonylcarbamoyladenylate + adenosine(37) in tRNA = N(6)-L-threonylcarbamoyladenosine(37) in tRNA + AMP + H(+). Required for the formation of a threonylcarbamoyl group on adenosine at position 37 (t(6)A37) in tRNAs that read codons beginning with adenine. Is involved in the transfer of the threonylcarbamoyl moiety of threonylcarbamoyl-AMP (TC-AMP) to the N6 group of A37, together with TsaE and TsaB. TsaD likely plays a direct catalytic role in this reaction. This Paramagnetospirillum magneticum (strain ATCC 700264 / AMB-1) (Magnetospirillum magneticum) protein is tRNA N6-adenosine threonylcarbamoyltransferase.